The sequence spans 508 residues: Maturase K (508 aa).

Belongs to the intron maturase 2 family. MatK subfamily.

Its subcellular location is the plastid. The protein localises to the chloroplast. In terms of biological role, usually encoded in the trnK tRNA gene intron. Probably assists in splicing its own and other chloroplast group II introns. The sequence is that of Maturase K from Ranunculus lingua (Greater spearwort).